Reading from the N-terminus, the 341-residue chain is Flap endonuclease 1 (341 aa).

An N-domain region spans residues methionine 1–arginine 98. Mg(2+) contacts are provided by aspartate 27, aspartate 80, glutamate 152, glutamate 154, aspartate 173, aspartate 175, and aspartate 236. Residues glutamate 116 to lysine 258 are I-domain. The interval lysine 330–phenylalanine 338 is interaction with PCNA.

This sequence belongs to the XPG/RAD2 endonuclease family. FEN1 subfamily. Interacts with PCNA. PCNA stimulates the nuclease activity without altering cleavage specificity. It depends on Mg(2+) as a cofactor.

In terms of biological role, structure-specific nuclease with 5'-flap endonuclease and 5'-3' exonuclease activities involved in DNA replication and repair. During DNA replication, cleaves the 5'-overhanging flap structure that is generated by displacement synthesis when DNA polymerase encounters the 5'-end of a downstream Okazaki fragment. Binds the unpaired 3'-DNA end and kinks the DNA to facilitate 5' cleavage specificity. Cleaves one nucleotide into the double-stranded DNA from the junction in flap DNA, leaving a nick for ligation. Also involved in the base excision repair (BER) pathway. Acts as a genome stabilization factor that prevents flaps from equilibrating into structures that lead to duplications and deletions. Also possesses 5'-3' exonuclease activity on nicked or gapped double-stranded DNA. This chain is Flap endonuclease 1, found in Thermococcus onnurineus (strain NA1).